The following is a 460-amino-acid chain: Elongation factor 1-alpha (460 aa).

Position 2 is a n,N,N-trimethylglycine (Gly2). Lys3 is modified (N6,N6-dimethyllysine; alternate). Lys3 carries the post-translational modification N6-methyllysine; alternate. In terms of domain architecture, tr-type G spans 6-241 (KTHINVVVIG…DSIEPPKRPT (236 aa)). The G1 stretch occupies residues 15–22 (GHVDSGKS). Residue 15–22 (GHVDSGKS) coordinates GTP. Residues 71 to 75 (GITID) are G2. Lys80 is subject to N6,N6,N6-trimethyllysine. The tract at residues 92–95 (DAPG) is G3. Residues 92–96 (DAPGH) and 154–157 (NKMD) contribute to the GTP site. Residues 154–157 (NKMD) form a G4 region. Positions 193–195 (SGF) are G5. Lys317 carries the post-translational modification N6,N6-dimethyllysine; alternate. The residue at position 317 (Lys317) is an N6-methyllysine; alternate. The residue at position 391 (Lys391) is an N6-methyllysine.

This sequence belongs to the TRAFAC class translation factor GTPase superfamily. Classic translation factor GTPase family. EF-Tu/EF-1A subfamily.

The protein localises to the cytoplasm. This protein promotes the GTP-dependent binding of aminoacyl-tRNA to the A-site of ribosomes during protein biosynthesis. This Hypocrea jecorina (Trichoderma reesei) protein is Elongation factor 1-alpha (tef1).